The primary structure comprises 366 residues: tRNA/tmRNA (uracil-C(5))-methyltransferase (366 aa).

5 residues coordinate S-adenosyl-L-methionine: Q190, Y218, N223, E239, and D299. C324 serves as the catalytic Nucleophile. The active-site Proton acceptor is E358.

This sequence belongs to the class I-like SAM-binding methyltransferase superfamily. RNA M5U methyltransferase family. TrmA subfamily.

The enzyme catalyses uridine(54) in tRNA + S-adenosyl-L-methionine = 5-methyluridine(54) in tRNA + S-adenosyl-L-homocysteine + H(+). The catalysed reaction is uridine(341) in tmRNA + S-adenosyl-L-methionine = 5-methyluridine(341) in tmRNA + S-adenosyl-L-homocysteine + H(+). Dual-specificity methyltransferase that catalyzes the formation of 5-methyluridine at position 54 (m5U54) in all tRNAs, and that of position 341 (m5U341) in tmRNA (transfer-mRNA). This Escherichia coli (strain UTI89 / UPEC) protein is tRNA/tmRNA (uracil-C(5))-methyltransferase.